The primary structure comprises 180 residues: Translation initiation factor IF-3 (180 aa).

The protein belongs to the IF-3 family. Monomer.

It localises to the cytoplasm. Functionally, IF-3 binds to the 30S ribosomal subunit and shifts the equilibrium between 70S ribosomes and their 50S and 30S subunits in favor of the free subunits, thus enhancing the availability of 30S subunits on which protein synthesis initiation begins. This Escherichia coli (strain K12 / MC4100 / BW2952) protein is Translation initiation factor IF-3.